A 241-amino-acid chain; its full sequence is Adenosylcobinamide-GDP ribazoletransferase (241 aa).

Transmembrane regions (helical) follow at residues 34–54 (RIPAYFTIVGYIPGLIYFTGS), 55–75 (FLSLNFGIIAPLLSIVLGFYL), 109–129 (VGPFAVFYGVLYVIVFWELIT), 133–153 (PVAFVFGSVFGRYTMDVVLVF), 165–185 (MLFPFNRFLLVPATLFTLPLL), 186–206 (LIDVKLFLVSIFSSWLVGFLI), and 221–241 (VLGGSCLIGQIVVLLILNYLI).

The protein belongs to the CobS family. Mg(2+) serves as cofactor.

Its subcellular location is the cell inner membrane. The enzyme catalyses alpha-ribazole + adenosylcob(III)inamide-GDP = adenosylcob(III)alamin + GMP + H(+). The catalysed reaction is alpha-ribazole 5'-phosphate + adenosylcob(III)inamide-GDP = adenosylcob(III)alamin 5'-phosphate + GMP + H(+). It functions in the pathway cofactor biosynthesis; adenosylcobalamin biosynthesis; adenosylcobalamin from cob(II)yrinate a,c-diamide: step 7/7. In terms of biological role, joins adenosylcobinamide-GDP and alpha-ribazole to generate adenosylcobalamin (Ado-cobalamin). Also synthesizes adenosylcobalamin 5'-phosphate from adenosylcobinamide-GDP and alpha-ribazole 5'-phosphate. The chain is Adenosylcobinamide-GDP ribazoletransferase from Fervidobacterium nodosum (strain ATCC 35602 / DSM 5306 / Rt17-B1).